Reading from the N-terminus, the 205-residue chain is Protein MIS12 homolog (205 aa).

Residues 108-205 (PYSEEDFQHL…EKESKRLKIS (98 aa)) are a coiled coil.

This sequence belongs to the mis12 family. In terms of assembly, component of the MIS12 complex composed of MIS12, DSN1, NSL1 and PMF1. Also interacts with KNL1, CBX3, CBX5, NDC80 and ZWINT.

Its subcellular location is the chromosome. The protein resides in the centromere. It is found in the kinetochore. Functionally, part of the MIS12 complex which is required for normal chromosome alignment and segregation and for kinetochore formation during mitosis. Essential for proper kinetochore microtubule attachments. This Homo sapiens (Human) protein is Protein MIS12 homolog.